A 559-amino-acid chain; its full sequence is Glucose-6-phosphate isomerase 2 (559 aa).

Residue Glu367 is the Proton donor of the active site. Residues His398 and Lys522 contribute to the active site.

Belongs to the GPI family.

The protein localises to the cytoplasm. It carries out the reaction alpha-D-glucose 6-phosphate = beta-D-fructose 6-phosphate. The protein operates within carbohydrate biosynthesis; gluconeogenesis. It functions in the pathway carbohydrate degradation; glycolysis; D-glyceraldehyde 3-phosphate and glycerone phosphate from D-glucose: step 2/4. Functionally, catalyzes the reversible isomerization of glucose-6-phosphate to fructose-6-phosphate. The chain is Glucose-6-phosphate isomerase 2 from Chromohalobacter salexigens (strain ATCC BAA-138 / DSM 3043 / CIP 106854 / NCIMB 13768 / 1H11).